The following is a 359-amino-acid chain: Mannose-1-phosphate guanylyltransferase catalytic subunit beta (359 aa).

Residues 2–221 (KALILVGGFG…EGFWMDVGQP (220 aa)) form a substrate-binding domain region. Aspartate 109 provides a ligand contact to GDP-alpha-D-mannose. Residue aspartate 109 coordinates Mg(2+). Residue lysine 161 is part of the active site. Aspartate 217 contacts GDP-alpha-D-mannose. Aspartate 217 contacts Mg(2+). Residues 244-359 (ATGNGIIGPV…SSIPEPEIIM (116 aa)) form a hexapeptide repeat domain region.

Belongs to the transferase hexapeptide repeat family. In terms of assembly, component of the GMPPA-GMPPB mannose-1-phosphate guanylyltransferase complex composed of 4 GMPPA subunits and 8 gmppB subunits; the complex is organized into three layers, a central layer made up of 2 gmppA dimers sandwiched between two layers each made up of 2 gmppB dimers. gmppB catalytic activity is reduced when part of the complex and binding of GDP-alpha-D-Mannose by gmppA induces allosteric feedback inhibition of gmppB. It depends on Mg(2+) as a cofactor.

The enzyme catalyses alpha-D-mannose 1-phosphate + GTP + H(+) = GDP-alpha-D-mannose + diphosphate. The protein operates within nucleotide-sugar biosynthesis; GDP-alpha-D-mannose biosynthesis; GDP-alpha-D-mannose from alpha-D-mannose 1-phosphate (GTP route): step 1/1. Its activity is regulated as follows. Enzyme activity is reduced by incorporation into the GMPPA-GMPPB mannose-1-phosphate guanylyltransferase complex. Allosterically inhibited, when part of the GMPPA-GMPPB complex, by GDP-alpha-D-mannose binding to GMPPA. Its function is as follows. Catalytic subunit of the GMPPA-GMPPB mannose-1-phosphate guanylyltransferase complex. Catalyzes the formation of GDP-mannose, an essential precursor of glycan moieties of glycoproteins and glycolipids. Can catalyze the reverse reaction in vitro. Together with GMPPA regulates GDP-alpha-D-mannose levels. In Dictyostelium discoideum (Social amoeba), this protein is Mannose-1-phosphate guanylyltransferase catalytic subunit beta (gmppB).